A 338-amino-acid chain; its full sequence is DNA-directed RNA polymerase subunit alpha (338 aa).

The tract at residues 1 to 225 is alpha N-terminal domain (alpha-NTD); sequence MLISQRPTIT…ELFGLARELN (225 aa). The segment at 242 to 338 is alpha C-terminal domain (alpha-CTD); sequence YIAAYSMPIE…YIDVEAEDSE (97 aa). Residues 319–338 are disordered; the sequence is LEGYDAETGGYIDVEAEDSE.

Belongs to the RNA polymerase alpha chain family. As to quaternary structure, homodimer. The RNAP catalytic core consists of 2 alpha, 1 beta, 1 beta' and 1 omega subunit. When a sigma factor is associated with the core the holoenzyme is formed, which can initiate transcription.

The catalysed reaction is RNA(n) + a ribonucleoside 5'-triphosphate = RNA(n+1) + diphosphate. DNA-dependent RNA polymerase catalyzes the transcription of DNA into RNA using the four ribonucleoside triphosphates as substrates. In Corynebacterium glutamicum (strain ATCC 13032 / DSM 20300 / JCM 1318 / BCRC 11384 / CCUG 27702 / LMG 3730 / NBRC 12168 / NCIMB 10025 / NRRL B-2784 / 534), this protein is DNA-directed RNA polymerase subunit alpha.